Reading from the N-terminus, the 1025-residue chain is Probable beta-galactosidase B (1025 aa).

The signal sequence occupies residues 1-21 (MATAFWLLLFLLGSLHVLTAA). N-linked (GlcNAc...) asparagine glycosylation is present at asparagine 23. Residue tyrosine 90 coordinates substrate. The N-linked (GlcNAc...) asparagine glycan is linked to asparagine 100. Substrate is bound by residues asparagine 135, alanine 136, glutamate 137, and asparagine 195. Glutamate 196 acts as the Proton donor in catalysis. N-linked (GlcNAc...) asparagine glycosylation is present at asparagine 211. Tyrosine 265 contributes to the substrate binding site. Cysteine 271 and cysteine 324 are disulfide-bonded. Glutamate 308 (nucleophile) is an active-site residue. Tyrosine 373 contacts substrate. N-linked (GlcNAc...) asparagine glycosylation is found at asparagine 411, asparagine 456, asparagine 736, asparagine 776, asparagine 884, asparagine 925, and asparagine 926.

The protein belongs to the glycosyl hydrolase 35 family.

The protein resides in the secreted. It catalyses the reaction Hydrolysis of terminal non-reducing beta-D-galactose residues in beta-D-galactosides.. Its function is as follows. Cleaves beta-linked terminal galactosyl residues from gangliosides, glycoproteins, and glycosaminoglycans. The polypeptide is Probable beta-galactosidase B (lacB) (Emericella nidulans (strain FGSC A4 / ATCC 38163 / CBS 112.46 / NRRL 194 / M139) (Aspergillus nidulans)).